Reading from the N-terminus, the 1403-residue chain is Baculoviral IAP repeat-containing protein 1f (1403 aa).

3 BIR repeats span residues glutamate 60 to leucine 127, glutamate 159 to leucine 227, and glutamate 278 to leucine 345. Zn(2+) is bound by residues cysteine 315, cysteine 318, histidine 335, and cysteine 342. The 296-residue stretch at serine 464–glutamate 759 folds into the NACHT domain. Glycine 473–threonine 478 serves as a coordination point for ATP.

In terms of assembly, component of the NLRC4 inflammasome, at least composed of NLRC4, caspase-1 (CASP1) and some NAIP protein. (Microbial infection) Interacts with S.typhimurium (Salmonella) flagellin.

In terms of biological role, sensor component of the NLRC4 inflammasome that specifically recognizes and binds flagellin from pathogenic bacteria. Association of pathogenic bacteria proteins drives in turn drive assembly and activation of the NLRC4 inflammasome, promoting caspase-1 activation, cytokine production and macrophage pyroptosis. The NLRC4 inflammasome is activated as part of the innate immune response to a range of intracellular bacteria. The NLRC4 inflammasome senses Gram-negative bacteria such as L.pneumophila and P.aeruginosa, enteric pathogens S.typhimurium (Salmonella) and S.flexneri. May contribute to prevent motor-neuron apoptosis induced by a variety of signals. The sequence is that of Baculoviral IAP repeat-containing protein 1f (Naip6) from Mus musculus (Mouse).